Reading from the N-terminus, the 121-residue chain is Phosphoribosyl-ATP pyrophosphatase (121 aa).

This sequence belongs to the PRA-PH family.

Its subcellular location is the cytoplasm. It carries out the reaction 1-(5-phospho-beta-D-ribosyl)-ATP + H2O = 1-(5-phospho-beta-D-ribosyl)-5'-AMP + diphosphate + H(+). It functions in the pathway amino-acid biosynthesis; L-histidine biosynthesis; L-histidine from 5-phospho-alpha-D-ribose 1-diphosphate: step 2/9. The polypeptide is Phosphoribosyl-ATP pyrophosphatase (Burkholderia ambifaria (strain MC40-6)).